A 415-amino-acid chain; its full sequence is Probable disease resistance protein At5g66890 (415 aa).

The NB-ARC domain occupies 8-43 (SFDALPHNLRECFLDMASFLEDQRIIASTIIDLWSA). 6 LRR repeats span residues 229 to 251 (SLEK…EDVS), 256 to 278 (SLQE…ISQV), 280 to 303 (SLKK…GDLR), 304 to 326 (DLET…IDRL), 328 to 351 (NLRF…GKLK), and 352 to 373 (KLEK…VKNL). Positions 239–260 (HVVDALNELEDVSETLQSLQEI) form a coiled coil.

The protein belongs to the disease resistance NB-LRR family.

Possible disease resistance protein. The protein is Probable disease resistance protein At5g66890 of Arabidopsis thaliana (Mouse-ear cress).